The primary structure comprises 321 residues: uncharacterized protein (321 aa).

Tyr49 acts as the Proton donor in catalysis. His106 serves as a coordination point for substrate.

It belongs to the aldo/keto reductase family.

This is an uncharacterized protein from Caenorhabditis elegans.